The primary structure comprises 121 residues: MARVKRGVTKHQRHKKILKLAKGYFGAKSKLFRPANEQVIKSLAYAYAHRRQRKGDFRKLWIARINAAARMNGINYSRLVNGLKKAGVEINRKMLADMAVNDQAGFNRLVDIAKEKLGLGA.

Belongs to the bacterial ribosomal protein bL20 family.

Binds directly to 23S ribosomal RNA and is necessary for the in vitro assembly process of the 50S ribosomal subunit. It is not involved in the protein synthesizing functions of that subunit. The protein is Large ribosomal subunit protein bL20 of Moorella thermoacetica (strain ATCC 39073 / JCM 9320).